Reading from the N-terminus, the 601-residue chain is Peptide transporter PTR2 (601 aa).

Residues Met-1–Asp-10 show a composition bias toward polar residues. Residues Met-1 to Glu-66 are disordered. At Met-1–Thr-150 the chain is on the extracellular side. Positions Asp-14–Thr-28 are enriched in basic and acidic residues. Tyr-37 bears the Phosphotyrosine mark. A phosphoserine mark is found at Ser-39 and Ser-45. Residues Val-42 to Pro-53 are compositionally biased toward polar residues. Residues Pro-55–Glu-66 are compositionally biased toward acidic residues. A helical membrane pass occupies residues Phe-151–Leu-172. At Phe-173–Asn-182 the chain is on the cytoplasmic side. The chain crosses the membrane as a helical span at residues Arg-183–Gly-202. Residues Met-203 to Val-210 are Extracellular-facing. Residues Leu-211–Gly-229 form a helical membrane-spanning segment. At Glu-230–His-267 the chain is on the cytoplasmic side. The helical transmembrane segment at Lys-268–Thr-287 threads the bilayer. Residues Leu-288–Gln-294 are Extracellular-facing. Residues Tyr-295–Thr-316 traverse the membrane as a helical segment. Over Lys-317–Met-378 the chain is Cytoplasmic. The helical transmembrane segment at Met-379–Ile-399 threads the bilayer. Topologically, residues Phe-400 to Ile-412 are extracellular. Residues Arg-413 to Met-429 form a helical membrane-spanning segment. Over Phe-430 to Ala-448 the chain is Cytoplasmic. Residues Gly-449–Val-466 form a helical membrane-spanning segment. Topologically, residues Cys-467 to Lys-494 are extracellular. A helical membrane pass occupies residues Ala-495 to Phe-513. Residues Gly-514–Val-526 lie on the Cytoplasmic side of the membrane. A helical transmembrane segment spans residues Asp-527–Leu-547. Residues Phe-548–Lys-554 are Extracellular-facing. A helical membrane pass occupies residues Tyr-555–Pro-577. Over Ile-578 to Tyr-601 the chain is Cytoplasmic. Residue Ser-594 is modified to Phosphoserine.

The protein belongs to the major facilitator superfamily. Proton-dependent oligopeptide transporter (POT/PTR) (TC 2.A.17) family.

The protein localises to the membrane. Uptake of small peptides. The polypeptide is Peptide transporter PTR2 (PTR2) (Saccharomyces cerevisiae (strain ATCC 204508 / S288c) (Baker's yeast)).